Consider the following 291-residue polypeptide: 4-diphosphocytidyl-2-C-methyl-D-erythritol kinase (291 aa).

Residue Lys-19 is part of the active site. An ATP-binding site is contributed by Pro-102 to Ser-112. Asp-144 is a catalytic residue.

The protein belongs to the GHMP kinase family. IspE subfamily.

It catalyses the reaction 4-CDP-2-C-methyl-D-erythritol + ATP = 4-CDP-2-C-methyl-D-erythritol 2-phosphate + ADP + H(+). Its pathway is isoprenoid biosynthesis; isopentenyl diphosphate biosynthesis via DXP pathway; isopentenyl diphosphate from 1-deoxy-D-xylulose 5-phosphate: step 3/6. Its function is as follows. Catalyzes the phosphorylation of the position 2 hydroxy group of 4-diphosphocytidyl-2C-methyl-D-erythritol. In Ectopseudomonas mendocina (strain ymp) (Pseudomonas mendocina), this protein is 4-diphosphocytidyl-2-C-methyl-D-erythritol kinase.